Consider the following 279-residue polypeptide: Diaminopimelate epimerase (279 aa).

Substrate contacts are provided by N11 and N64. C73 acts as the Proton donor in catalysis. Residues 74–75 (GN), N170, and 187–188 (ER) each bind substrate. C196 (proton acceptor) is an active-site residue. Position 197–198 (197–198 (GS)) interacts with substrate. Positions 255–279 (NTDHQRRRHSLSRSPSGRPRLQECR) are disordered.

The protein belongs to the diaminopimelate epimerase family. Homodimer.

Its subcellular location is the cytoplasm. The enzyme catalyses (2S,6S)-2,6-diaminopimelate = meso-2,6-diaminopimelate. The protein operates within amino-acid biosynthesis; L-lysine biosynthesis via DAP pathway; DL-2,6-diaminopimelate from LL-2,6-diaminopimelate: step 1/1. Functionally, catalyzes the stereoinversion of LL-2,6-diaminopimelate (L,L-DAP) to meso-diaminopimelate (meso-DAP), a precursor of L-lysine. The chain is Diaminopimelate epimerase from Methanopyrus kandleri (strain AV19 / DSM 6324 / JCM 9639 / NBRC 100938).